A 488-amino-acid polypeptide reads, in one-letter code: Long chain base biosynthesis protein 2a (488 aa).

Residues 4–24 (LPYTTALTTLFSYGLLFAFGQ) traverse the membrane as a helical segment. K311 is modified (N6-(pyridoxal phosphate)lysine).

It belongs to the class-II pyridoxal-phosphate-dependent aminotransferase family. In terms of assembly, heterodimer with LCB1. Component of the serine palmitoyltransferase (SPT) complex, composed of LCB1 and LCB2. Pyridoxal 5'-phosphate is required as a cofactor.

The protein localises to the endoplasmic reticulum membrane. It carries out the reaction L-serine + hexadecanoyl-CoA + H(+) = 3-oxosphinganine + CO2 + CoA. It functions in the pathway lipid metabolism; sphingolipid metabolism. Its function is as follows. Serine palmitoyltransferase (SPT). The heterodimer formed with LCB1 constitutes the catalytic core. The chain is Long chain base biosynthesis protein 2a from Oryza sativa subsp. japonica (Rice).